Consider the following 126-residue polypeptide: Profilin-1A (126 aa).

Residues 2–36 (SWQTYVDTNLVGTGAVTQAAILGLDGNTWATSAGF) are actin binding. Residue lysine 104 is modified to N6,N6,N6-trimethyllysine.

The protein belongs to the profilin family. Occurs in many kinds of cells as a complex with monomeric actin in a 1:1 ratio.

It localises to the cytoplasm. It is found in the cytoskeleton. Functionally, binds to actin and affects the structure of the cytoskeleton. At high concentrations, profilin prevents the polymerization of actin, whereas it enhances it at low concentrations. By binding to PIP2, it inhibits the formation of IP3 and DG. This Acanthamoeba castellanii (Amoeba) protein is Profilin-1A.